A 250-amino-acid polypeptide reads, in one-letter code: HLA class II histocompatibility antigen, DO alpha chain (250 aa).

A signal peptide spans 1-25 (MALRAGLVLGFHTLMTLLSPQEAGA). Residues 26–110 (TKADHMGSYG…ERSNRSRAIN (85 aa)) are alpha-1. At 26–217 (TKADHMGSYG…VPIPPPDAME (192 aa)) the chain is on the extracellular side. N-linked (GlcNAc...) asparagine glycosylation is found at N104 and N144. Residues 111–204 (VPPRVTVLPK…GLDAPLLRHW (94 aa)) form an alpha-2 region. Positions 113–205 (PRVTVLPKSR…LDAPLLRHWE (93 aa)) constitute an Ig-like C1-type domain. C133 and C189 are disulfide-bonded. The tract at residues 205-217 (ELQVPIPPPDAME) is connecting peptide. A helical transmembrane segment spans residues 218–240 (TLVCALGLAIGLVGFLVGTVLII). Residues 241–250 (MGTYVSSVPR) are Cytoplasmic-facing.

The protein belongs to the MHC class II family. In terms of assembly, heterodimer of an alpha chain (DOA) and a beta chain (DOB). Forms a heterotetrameric complex with an HLA-DM molecule during intracellular transport in endosomal/lysosomal compartments in B-cells.

The protein resides in the endosome membrane. The protein localises to the lysosome membrane. Its function is as follows. Important modulator in the HLA class II restricted antigen presentation pathway by interaction with the HLA-DM molecule in B-cells. Modifies peptide exchange activity of HLA-DM. This is HLA class II histocompatibility antigen, DO alpha chain (HLA-DOA) from Homo sapiens (Human).